The chain runs to 595 residues: Adenine deaminase 2 (595 aa).

It belongs to the metallo-dependent hydrolases superfamily. Adenine deaminase family. Requires Mn(2+) as cofactor.

The enzyme catalyses adenine + H2O + H(+) = hypoxanthine + NH4(+). This is Adenine deaminase 2 from Rhizobium etli (strain ATCC 51251 / DSM 11541 / JCM 21823 / NBRC 15573 / CFN 42).